The primary structure comprises 255 residues: Indole-3-glycerol phosphate synthase (255 aa).

The protein belongs to the TrpC family.

The catalysed reaction is 1-(2-carboxyphenylamino)-1-deoxy-D-ribulose 5-phosphate + H(+) = (1S,2R)-1-C-(indol-3-yl)glycerol 3-phosphate + CO2 + H2O. It functions in the pathway amino-acid biosynthesis; L-tryptophan biosynthesis; L-tryptophan from chorismate: step 4/5. The polypeptide is Indole-3-glycerol phosphate synthase (Streptococcus mutans serotype c (strain ATCC 700610 / UA159)).